We begin with the raw amino-acid sequence, 194 residues long: ATP-dependent Clp protease proteolytic subunit (194 aa).

The active-site Nucleophile is serine 97. Histidine 122 is an active-site residue.

This sequence belongs to the peptidase S14 family. Fourteen ClpP subunits assemble into 2 heptameric rings which stack back to back to give a disk-like structure with a central cavity, resembling the structure of eukaryotic proteasomes.

The protein localises to the cytoplasm. The catalysed reaction is Hydrolysis of proteins to small peptides in the presence of ATP and magnesium. alpha-casein is the usual test substrate. In the absence of ATP, only oligopeptides shorter than five residues are hydrolyzed (such as succinyl-Leu-Tyr-|-NHMec, and Leu-Tyr-Leu-|-Tyr-Trp, in which cleavage of the -Tyr-|-Leu- and -Tyr-|-Trp bonds also occurs).. Cleaves peptides in various proteins in a process that requires ATP hydrolysis. Has a chymotrypsin-like activity. Plays a major role in the degradation of misfolded proteins. In Carsonella ruddii (strain PV), this protein is ATP-dependent Clp protease proteolytic subunit.